The sequence spans 333 residues: Ornithine carbamoyltransferase (333 aa).

Carbamoyl phosphate contacts are provided by residues Ser56–Thr59, Arg107, and His134–Gln137. L-ornithine is bound by residues Asn167, Asp231, and Ser235–Met236. Residues Cys273 to Leu274 and Arg318 contribute to the carbamoyl phosphate site.

The protein belongs to the aspartate/ornithine carbamoyltransferase superfamily. OTCase family.

It localises to the cytoplasm. It carries out the reaction carbamoyl phosphate + L-ornithine = L-citrulline + phosphate + H(+). Its pathway is amino-acid degradation; L-arginine degradation via ADI pathway; carbamoyl phosphate from L-arginine: step 2/2. Functionally, reversibly catalyzes the transfer of the carbamoyl group from carbamoyl phosphate (CP) to the N(epsilon) atom of ornithine (ORN) to produce L-citrulline. This chain is Ornithine carbamoyltransferase, found in Clostridium botulinum (strain Langeland / NCTC 10281 / Type F).